A 172-amino-acid polypeptide reads, in one-letter code: 3-hydroxydecanoyl-[acyl-carrier-protein] dehydratase (172 aa).

Residue H71 is part of the active site.

Belongs to the thioester dehydratase family. FabA subfamily. As to quaternary structure, homodimer.

It localises to the cytoplasm. The enzyme catalyses a (3R)-hydroxyacyl-[ACP] = a (2E)-enoyl-[ACP] + H2O. The catalysed reaction is (3R)-hydroxydecanoyl-[ACP] = (2E)-decenoyl-[ACP] + H2O. It catalyses the reaction (2E)-decenoyl-[ACP] = (3Z)-decenoyl-[ACP]. It participates in lipid metabolism; fatty acid biosynthesis. In terms of biological role, necessary for the introduction of cis unsaturation into fatty acids. Catalyzes the dehydration of (3R)-3-hydroxydecanoyl-ACP to E-(2)-decenoyl-ACP and then its isomerization to Z-(3)-decenoyl-ACP. Can catalyze the dehydratase reaction for beta-hydroxyacyl-ACPs with saturated chain lengths up to 16:0, being most active on intermediate chain length. The polypeptide is 3-hydroxydecanoyl-[acyl-carrier-protein] dehydratase (Erwinia tasmaniensis (strain DSM 17950 / CFBP 7177 / CIP 109463 / NCPPB 4357 / Et1/99)).